A 917-amino-acid polypeptide reads, in one-letter code: DNA repair endonuclease XPF (917 aa).

The tract at residues 1-457 (MEPGLSGERR…EVWVNVRKGD (457 aa)) is helicase-like. 2 leucine-zipper regions span residues 233–254 (LNAC…DLSL) and 270–298 (LDPL…LQYL). At Lys289 the chain carries N6-acetyllysine. Residues 454–479 (RKGDGPKRTTKSDKRPKAAPNKERAS) show a composition bias toward basic and acidic residues. 2 disordered regions span residues 454-524 (RKGD…SSPE) and 643-681 (VPEE…QNGT). The short motif at 487 to 492 (KRKKQE) is the Nuclear localization signal element. Positions 507–516 (EDKALEEDLC) are enriched in basic and acidic residues. Position 522 is a phosphoserine (Ser522). The span at 643-653 (VPEEREGRDET) shows a compositional bias: basic and acidic residues. The nuclease stretch occupies residues 659-814 (RGSAALDAPT…PSPHATAELF (156 aa)). The ERCC4 domain maps to 684–764 (SIVVDMREFR…RPVLLIEFDP (81 aa)). Position 765 is a phosphoserine (Ser765). The segment at 838-906 (TLPESDRYNP…QLHDFLHTAY (69 aa)) is hhH2, dimerization with ERCC1. Residue Lys912 is modified to N6-acetyllysine.

It belongs to the XPF family. In terms of assembly, heterodimer composed of ERCC1 and ERCC4/XPF. Interacts with SLX4/BTBD12; this interaction is direct and links the ERCC1-ERCC4/XPF complex to SLX4, which may coordinate the action of the structure-specific endonuclease during DNA repair. Mg(2+) is required as a cofactor. In terms of processing, acetylation at Lys-912 by KAT5 promotes interaction with ERCC1 by disrupting a salt bridge between Asp-908 and Lys-912, thereby exposing a second binding site for ERCC1. Deacetylated by SIRT1.

It is found in the nucleus. It localises to the chromosome. Its function is as follows. Catalytic component of a structure-specific DNA repair endonuclease responsible for the 5-prime incision during DNA repair, and which is essential for nucleotide excision repair (NER) and interstrand cross-link (ICL) repair. The protein is DNA repair endonuclease XPF of Mus musculus (Mouse).